Consider the following 205-residue polypeptide: Meiotic nuclear division protein 1 homolog (205 aa).

The stretch at 79 to 147 forms a coiled coil; the sequence is LHARKRKLET…CADLEKYKEC (69 aa).

It belongs to the MND1 family.

The protein resides in the nucleus. Its function is as follows. Required for proper homologous chromosome pairing and efficient cross-over and intragenic recombination during meiosis. Stimulates both dmc1- and rad51-mediated homologous strand assimilation, which is required for the resolution of meiotic double-strand breaks. This is Meiotic nuclear division protein 1 homolog from Xenopus laevis (African clawed frog).